The sequence spans 318 residues: Galactinol synthase 1 (318 aa).

Lysine 102 is a catalytic residue. Residues aspartate 118, aspartate 120, and histidine 244 each contribute to the Mn(2+) site.

This sequence belongs to the glycosyltransferase 8 family. Galactosyltransferase subfamily. A divalent metal cation serves as cofactor. As to expression, expressed in seeds, mostly in radicle tips.

It is found in the cytoplasm. It catalyses the reaction myo-inositol + UDP-alpha-D-galactose = alpha-D-galactosyl-(1-&gt;3)-1D-myo-inositol + UDP + H(+). Galactinol synthase involved in the biosynthesis of raffinose family oligosaccharides (RFOs) that function as osmoprotectants. May promote plant stress tolerance. This is Galactinol synthase 1 (GOLS1) from Solanum lycopersicum (Tomato).